The sequence spans 151 residues: Transcriptional regulator MraZ (151 aa).

SpoVT-AbrB domains are found at residues 7 to 53 (EYDC…SQTE) and 82 to 125 (INEV…SPDL).

Belongs to the MraZ family. As to quaternary structure, forms oligomers.

It is found in the cytoplasm. Its subcellular location is the nucleoid. The protein is Transcriptional regulator MraZ of Cytophaga hutchinsonii (strain ATCC 33406 / DSM 1761 / CIP 103989 / NBRC 15051 / NCIMB 9469 / D465).